The chain runs to 380 residues: Cytochrome b (380 aa).

The next 4 membrane-spanning stretches (helical) occupy residues phenylalanine 33–methionine 53, tryptophan 77–valine 98, tryptophan 113–leucine 133, and phenylalanine 178–leucine 198. Heme b contacts are provided by histidine 83 and histidine 97. Heme b-binding residues include histidine 182 and histidine 196. Histidine 201 serves as a coordination point for a ubiquinone. 4 consecutive transmembrane segments (helical) span residues isoleucine 226–phenylalanine 246, leucine 288–asparagine 308, isoleucine 320–glycine 340, and phenylalanine 347–phenylalanine 367.

The protein belongs to the cytochrome b family. In terms of assembly, the cytochrome bc1 complex contains 11 subunits: 3 respiratory subunits (MT-CYB, CYC1 and UQCRFS1), 2 core proteins (UQCRC1 and UQCRC2) and 6 low-molecular weight proteins (UQCRH/QCR6, UQCRB/QCR7, UQCRQ/QCR8, UQCR10/QCR9, UQCR11/QCR10 and a cleavage product of UQCRFS1). This cytochrome bc1 complex then forms a dimer. Requires heme b as cofactor.

It localises to the mitochondrion inner membrane. In terms of biological role, component of the ubiquinol-cytochrome c reductase complex (complex III or cytochrome b-c1 complex) that is part of the mitochondrial respiratory chain. The b-c1 complex mediates electron transfer from ubiquinol to cytochrome c. Contributes to the generation of a proton gradient across the mitochondrial membrane that is then used for ATP synthesis. In Calomys musculinus (Drylands vesper mouse), this protein is Cytochrome b (MT-CYB).